We begin with the raw amino-acid sequence, 601 residues long: Probable HECT-type ubiquitin ligase-interacting protein creD (601 aa).

Disordered regions lie at residues 374-397 and 454-496; these read EVDP…GTLS and VSTD…GMAT. The segment covering 455 to 473 has biased composition (low complexity); it reads STDSFGPSSGSNSQSPASP. Basic and acidic residues predominate over residues 475 to 489; it reads LSRRPSDEGYHDHDY.

Belongs to the arrestin family. As to quaternary structure, interacts with hulA.

Its function is as follows. Component of the regulatory network controlling carbon source utilization through ubiquitination and deubiquitination involving creA, creB, creC, creD and acrB. May be involved in signaling by recognizing appropriately phosphorylated substrates via its arrestin domains and then recruit a HECT-type ubiquitin ligase such as hulA, leading to ubiquitination of the substrate, providing a link between ubiquitination and phosphorylation in protein regulation and stability. The polypeptide is Probable HECT-type ubiquitin ligase-interacting protein creD (creD) (Aspergillus fumigatus (strain CBS 144.89 / FGSC A1163 / CEA10) (Neosartorya fumigata)).